A 287-amino-acid chain; its full sequence is Orotidine 5'-phosphate decarboxylase (287 aa).

K97 (proton donor) is an active-site residue.

It belongs to the OMP decarboxylase family. Type 2 subfamily.

The enzyme catalyses orotidine 5'-phosphate + H(+) = UMP + CO2. It functions in the pathway pyrimidine metabolism; UMP biosynthesis via de novo pathway; UMP from orotate: step 2/2. This Clostridium perfringens (strain SM101 / Type A) protein is Orotidine 5'-phosphate decarboxylase.